Reading from the N-terminus, the 304-residue chain is Cell surface-binding protein OPG105 (304 aa).

The region spanning 1 to 235 (MPQQLSPINI…NDDTQVYYSG (235 aa)) is the Alpha-carbonic anhydrase domain. The Virion surface segment spans residues 1–275 (MPQQLSPINI…YQKYIEGNKT (275 aa)). The chain crosses the membrane as a helical span at residues 276–294 (FAIIAIVFVFILTAILFLM). Topologically, residues 295–304 (SQRYSREKQN) are intravirion.

The protein belongs to the alpha-carbonic anhydrase family. In terms of assembly, homodimer; disulfide-linked. Apparently non-glycosylated.

It is found in the virion membrane. Binds to chondroitin sulfate on the cell surface to provide virion attachment to target cell. This is Cell surface-binding protein OPG105 (OPG105) from Monkeypox virus (strain Zaire-96-I-16) (MPX).